The chain runs to 130 residues: Large ribosomal subunit protein bL17 (130 aa).

The protein belongs to the bacterial ribosomal protein bL17 family. In terms of assembly, part of the 50S ribosomal subunit. Contacts protein L32.

This Delftia acidovorans (strain DSM 14801 / SPH-1) protein is Large ribosomal subunit protein bL17.